Here is a 69-residue protein sequence, read N- to C-terminus: Photosystem I reaction center subunit IV (69 aa).

Belongs to the PsaE family.

Its subcellular location is the cellular thylakoid membrane. In terms of biological role, stabilizes the interaction between PsaC and the PSI core, assists the docking of the ferredoxin to PSI and interacts with ferredoxin-NADP oxidoreductase. In Prochlorococcus marinus (strain MIT 9515), this protein is Photosystem I reaction center subunit IV.